A 557-amino-acid chain; its full sequence is Potassium-transporting ATPase potassium-binding subunit (557 aa).

12 helical membrane-spanning segments follow: residues Gly-5–Ser-25, Leu-63–Gly-83, Gly-132–Ile-152, Leu-170–Ile-190, Phe-253–Val-273, Leu-283–Val-303, Val-329–Ala-349, Ala-356–Val-376, Gly-379–Gly-399, Leu-416–Met-436, Leu-484–Ala-504, and Leu-526–Ala-546.

The protein belongs to the KdpA family. As to quaternary structure, the system is composed of three essential subunits: KdpA, KdpB and KdpC.

The protein localises to the cell inner membrane. Part of the high-affinity ATP-driven potassium transport (or Kdp) system, which catalyzes the hydrolysis of ATP coupled with the electrogenic transport of potassium into the cytoplasm. This subunit binds the periplasmic potassium ions and delivers the ions to the membrane domain of KdpB through an intramembrane tunnel. In Escherichia coli (strain SMS-3-5 / SECEC), this protein is Potassium-transporting ATPase potassium-binding subunit.